The following is a 134-amino-acid chain: Arsenate reductase (134 aa).

Active-site nucleophile residues include Cys11, Cys83, and Cys90. 2 disulfides stabilise this stretch: Cys11–Cys83 and Cys83–Cys90.

It belongs to the low molecular weight phosphotyrosine protein phosphatase family. Thioredoxin-coupled ArsC subfamily.

Its subcellular location is the cytoplasm. The enzyme catalyses arsenate + [thioredoxin]-dithiol + H(+) = arsenite + [thioredoxin]-disulfide + H2O. Catalyzes the reduction of arsenate [As(V)] to arsenite [As(III)]. This Bacillus cereus (strain 03BB102) protein is Arsenate reductase.